A 233-amino-acid chain; its full sequence is 5'-methylthioadenosine/S-adenosylhomocysteine nucleosidase (233 aa).

Catalysis depends on E12, which acts as the Proton acceptor. Residues G78, I156, and 177–178 contribute to the substrate site; that span reads ME. The Proton donor role is filled by D201.

This sequence belongs to the PNP/UDP phosphorylase family. MtnN subfamily.

It carries out the reaction S-adenosyl-L-homocysteine + H2O = S-(5-deoxy-D-ribos-5-yl)-L-homocysteine + adenine. The catalysed reaction is S-methyl-5'-thioadenosine + H2O = 5-(methylsulfanyl)-D-ribose + adenine. The enzyme catalyses 5'-deoxyadenosine + H2O = 5-deoxy-D-ribose + adenine. It functions in the pathway amino-acid biosynthesis; L-methionine biosynthesis via salvage pathway; S-methyl-5-thio-alpha-D-ribose 1-phosphate from S-methyl-5'-thioadenosine (hydrolase route): step 1/2. Functionally, catalyzes the irreversible cleavage of the glycosidic bond in both 5'-methylthioadenosine (MTA) and S-adenosylhomocysteine (SAH/AdoHcy) to adenine and the corresponding thioribose, 5'-methylthioribose and S-ribosylhomocysteine, respectively. Also cleaves 5'-deoxyadenosine, a toxic by-product of radical S-adenosylmethionine (SAM) enzymes, into 5-deoxyribose and adenine. This Listeria welshimeri serovar 6b (strain ATCC 35897 / DSM 20650 / CCUG 15529 / CIP 8149 / NCTC 11857 / SLCC 5334 / V8) protein is 5'-methylthioadenosine/S-adenosylhomocysteine nucleosidase.